The following is a 405-amino-acid chain: Argininosuccinate synthase (405 aa).

12–20 (AYSGGLDTS) is an ATP binding site. Residues tyrosine 90 and serine 95 each contribute to the L-citrulline site. Glycine 120 is a binding site for ATP. L-aspartate contacts are provided by threonine 122, asparagine 126, and aspartate 127. Asparagine 126 contributes to the L-citrulline binding site. Arginine 130, serine 179, serine 188, glutamate 265, and tyrosine 277 together coordinate L-citrulline.

Belongs to the argininosuccinate synthase family. Type 1 subfamily. Homotetramer.

Its subcellular location is the cytoplasm. The enzyme catalyses L-citrulline + L-aspartate + ATP = 2-(N(omega)-L-arginino)succinate + AMP + diphosphate + H(+). The protein operates within amino-acid biosynthesis; L-arginine biosynthesis; L-arginine from L-ornithine and carbamoyl phosphate: step 2/3. This Clostridium perfringens (strain 13 / Type A) protein is Argininosuccinate synthase.